We begin with the raw amino-acid sequence, 175 residues long: Adenine phosphoribosyltransferase (175 aa).

Belongs to the purine/pyrimidine phosphoribosyltransferase family. Homodimer.

The protein resides in the cytoplasm. The enzyme catalyses AMP + diphosphate = 5-phospho-alpha-D-ribose 1-diphosphate + adenine. It functions in the pathway purine metabolism; AMP biosynthesis via salvage pathway; AMP from adenine: step 1/1. Catalyzes a salvage reaction resulting in the formation of AMP, that is energically less costly than de novo synthesis. The protein is Adenine phosphoribosyltransferase of Maricaulis maris (strain MCS10) (Caulobacter maris).